The sequence spans 921 residues: Protein translocase subunit SecA (921 aa).

ATP is bound by residues Q85, 103–107 (GEGKT), and D514. Positions 905, 907, 916, and 917 each coordinate Zn(2+).

The protein belongs to the SecA family. As to quaternary structure, monomer and homodimer. Part of the essential Sec protein translocation apparatus which comprises SecA, SecYEG and auxiliary proteins SecDF-YajC and YidC. Requires Zn(2+) as cofactor.

It localises to the cell inner membrane. The protein resides in the cytoplasm. It carries out the reaction ATP + H2O + cellular proteinSide 1 = ADP + phosphate + cellular proteinSide 2.. Part of the Sec protein translocase complex. Interacts with the SecYEG preprotein conducting channel. Has a central role in coupling the hydrolysis of ATP to the transfer of proteins into and across the cell membrane, serving both as a receptor for the preprotein-SecB complex and as an ATP-driven molecular motor driving the stepwise translocation of polypeptide chains across the membrane. This is Protein translocase subunit SecA from Herminiimonas arsenicoxydans.